The chain runs to 1394 residues: Ninein-like protein (1394 aa).

EF-hand domains are found at residues 8-43 and 42-77; these read HYVSRLRDVYSSCDTTGTGFLDQEELTQLCTKLGLE and LEEQLPALLHILLGDDRLARVNFEEFKEGFVAVLSS. Disordered stretches follow at residues 77–99 and 126–166; these read SGSGVEPSDEEGSSSESATSCAV and KYGS…KEPQ. At Ser-149 the chain carries Phosphoserine. Over residues 151–166 the composition is skewed to basic and acidic residues; sequence ESLKSDEDAESAKEPQ. EF-hand domains are found at residues 197 to 232 and 234 to 269; these read TPENLVQGIWHELGIGSSGHLNEQELAVVCRSIGLH and LEKQELEELFSKLDQDGDGRVSLAEFQLGLFGHEPP. Residues Asp-247, Asp-249, Asp-251, Arg-253, and Glu-258 each contribute to the Ca(2+) site. 3 coiled-coil regions span residues 382-423, 461-515, and 544-584; these read RQEL…MDDC, WEQA…DSEK, and EQFT…SRQS. The KEN box motif lies at 494–496; it reads KEN. Residues 578-602 form a disordered region; that stretch reads LPRSRQSPAGTPGTHRRRIPGRGPA. Residues 632-640 carry the D-box motif; sequence RMQLETKVN. Residues 835–863 are a coiled coil; it reads EKEKLEQTYREQVEGLVQEADVLRALLKN. Residues 866 to 893 show a composition bias toward polar residues; that stretch reads TVVSDQQERTPSSMSLGPDSRQQPTARQ. A disordered region spans residues 866 to 977; sequence TVVSDQQERT…SARTLTGQGQ (112 aa). Residues 939 to 951 show a composition bias toward basic and acidic residues; that stretch reads RSSENLGVRDNHQ. Coiled coils occupy residues 1057 to 1229 and 1269 to 1331; these read SESE…ELTE and GARV…LRKQ.

In terms of assembly, interacts with gamma-tubulin and TUBGCP4. Interacts with anaphase promoting complex/cyclosome (APC/C). Interacts with CDC20 and FZR1. Interacts with LCA5 and USH2A. Post-translationally, phosphorylated by PLK1 which disrupts its centrosome association and interaction with gamma-tubulin. Ubiquitinated by the APC/C complex leading to its degradation.

It localises to the cytoplasm. The protein resides in the cytoskeleton. It is found in the microtubule organizing center. Its subcellular location is the centrosome. In terms of biological role, involved in the microtubule organization in interphase cells. Overexpression induces the fragmentation of the Golgi, and causes lysosomes to disperse toward the cell periphery; it also interferes with mitotic spindle assembly. Involved in vesicle transport in photoreceptor cells. The sequence is that of Ninein-like protein (Ninl) from Mus musculus (Mouse).